Here is a 142-residue protein sequence, read N- to C-terminus: Multiprotein-bridging factor 1a (142 aa).

A compositionally biased stretch (polar residues) spans 51 to 64 (GTNKAASSGTSLNT). The interval 51–77 (GTNKAASSGTSLNTKMLDDDTENLTHE) is disordered. Residues 87–141 (IMQARTDKKLTQSQLAQIINEKPQVIQEYESGKAIPNQQILSKLERALGAKLRGK) enclose the HTH cro/C1-type domain. A DNA-binding region (H-T-H motif) is located at residues 98–117 (QSQLAQIINEKPQVIQEYES).

This sequence belongs to the MBF1 family. As to expression, expressed in leaves, roots, stems, flowers, siliques and shoots. Detected only in anthers and some seeds in siliques.

Its subcellular location is the nucleus. It localises to the nucleolus. In terms of biological role, transcriptional coactivator that stimulates transcriptional activity by bridging regulatory proteins and TBP, thereby recruiting TBP to promoters occupied by DNA-binding regulators. This Arabidopsis thaliana (Mouse-ear cress) protein is Multiprotein-bridging factor 1a (MBF1A).